The primary structure comprises 348 residues: Protein lifeguard 1 (348 aa).

A disordered region spans residues methionine 1–serine 118. The segment covering tyrosine 14–proline 41 has biased composition (pro residues). Over residues tyrosine 42–tyrosine 57 the composition is skewed to low complexity. Residues glycine 82–glutamine 101 are compositionally biased toward pro residues. 7 helical membrane passes run valine 142–phenylalanine 162, valine 174–cysteine 194, leucine 205–phenylalanine 225, alanine 230–methionine 250, methionine 260–isoleucine 280, isoleucine 284–aspartate 304, and phenylalanine 323–isoleucine 343.

This sequence belongs to the BI1 family. LFG subfamily.

It is found in the membrane. Its function is as follows. Potential apoptotic regulator. The sequence is that of Protein lifeguard 1 (Grina) from Rattus norvegicus (Rat).